The sequence spans 514 residues: Nucleus accumbens-associated protein 1 (514 aa).

The BTB domain maps to 30 to 94 (CDVSVVVKGH…CYTGRLSMNM (65 aa)). Residue K167 forms a Glycyl lysine isopeptide (Lys-Gly) (interchain with G-Cter in SUMO1); alternate linkage. K167 participates in a covalent cross-link: Glycyl lysine isopeptide (Lys-Gly) (interchain with G-Cter in SUMO2); alternate. A Glycyl lysine isopeptide (Lys-Gly) (interchain with G-Cter in SUMO2) cross-link involves residue K182. Disordered regions lie at residues 183 to 218 (RLWD…NRMP) and 241 to 279 (GPSM…EEGT). S187 is modified (phosphoserine). A compositionally biased stretch (polar residues) spans 242–251 (PSMSERTSPG). A Phosphoserine; by PKC modification is found at S245. The span at 252–264 (TSSAYTSDSPSSY) shows a compositional bias: low complexity. A compositionally biased stretch (acidic residues) spans 267 to 279 (EEDEEEDAGEEGT). Residues K304, K438, K466, and K485 each participate in a glycyl lysine isopeptide (Lys-Gly) (interchain with G-Cter in SUMO2) cross-link. In terms of domain architecture, BEN spans 360–457 (GTNVYITRAQ…DMCTNARRVV (98 aa)). Phosphoserine occurs at positions 492 and 496.

As to quaternary structure, homooligomer; mediated by the BTB domain. Both isoforms interact with HDAC3 and HDAC4. Interacts (via BTB domain) with CUL3, PSMD7 and RCOR1. In terms of processing, phosphorylated by protein kinase C (PKC). As to expression, highly expressed in the hippocampus, brain cortex, cerebellum and brainstem. Expressed in the nucleus accumbens, olfactory tubercle, the striatum, frontal and parietal cortex and ventral pallidum. Weakly expressed in the heart, liver, kidney, spleen, testis, and skeletal muscle. Isoform 2 is expressed in the brain and liver, less abundantly expressed in the brain than isoform 1.

The protein localises to the nucleus. Its subcellular location is the cytoplasm. Its function is as follows. Functions as a transcriptional repressor. Isoform 1 is a stronger transcriptional repressor than isoform 2. Seems to function as a transcriptional corepressor in neuronal cells through recruitment of HDAC3 and HDAC4. Contributes to tumor progression, and tumor cell proliferation and survival. This may be mediated at least in part through repressing transcriptional activity of GADD45GIP1. Required for recruiting the proteasome from the nucleus to the cytoplasm and dendritic spines. The chain is Nucleus accumbens-associated protein 1 (Nacc1) from Rattus norvegicus (Rat).